A 54-amino-acid polypeptide reads, in one-letter code: Ovomucoid (54 aa).

The 51-residue stretch at 4-54 (VDCSEYPKPVCSLEYMPLCGSDSQTYSNECNFCNAVVDSNGTLTLSHFGKC) folds into the Kazal-like domain. 3 disulfides stabilise this stretch: cysteine 6/cysteine 36, cysteine 14/cysteine 33, and cysteine 22/cysteine 54. An N-linked (GlcNAc...) asparagine glycan is attached at asparagine 43.

The protein localises to the secreted. The chain is Ovomucoid from Caracara plancus (Southern caracara).